The chain runs to 384 residues: MSQQHTLPVTLPPALRQELLGTLSPPAAAQQEQRKQPTPLPTACQKVGSELPGEVPSKHEEKGTDPVKGVLEQECGQQEPELHLGKQQDVHLMKRQDPQEPELHLGKQPEPEGPEPHLGKEQQHQESQDPELHLGKQQQQESQEQELYPGKQQEPQDPELHLGKQQQQESQEQGLCLIKQREPQESQEQRLHLGKEQESQEQRLHLGEEQASQEQRLHLGEEQASQEQRLHLGEEQASPEQRLQLLPQGPQEQELHLGKQQQQQESQQHQEQHEEHQKAEDLGQQHRQEKAQREQQLEEQLDEGKKLLDQQLDQEAVKRHEQLQRDEQFGMKKEQLLEPPGQQKGQLEKPVFVPVPGQVQDIQPAQTAKGEALLLPEQPQEPEV.

A disordered region spans residues 1 to 384 (MSQQHTLPVT…LPEQPQEPEV (384 aa)). Basic and acidic residues-rich tracts occupy residues 56 to 65 (PSKHEEKGTD) and 80 to 134 (PELH…ELHL). Low complexity predominate over residues 137-146 (QQQQESQEQE). Residues 179 to 208 (KQREPQESQEQRLHLGKEQESQEQRLHLGE) are compositionally biased toward basic and acidic residues. Positions 239-267 (PEQRLQLLPQGPQEQELHLGKQQQQQESQ) are enriched in low complexity. 2 stretches are compositionally biased toward basic and acidic residues: residues 268-308 (QHQE…KKLL) and 315-336 (EAVK…KEQL).

The protein belongs to the involucrin family. As to quaternary structure, directly or indirectly cross-linked to cornifelin (CNFN). Substrate of transglutaminase. Specific glutamines or lysines are cross-linked to keratins, desmoplakin and to inter involucrin molecules. Keratinocytes of epidermis and other stratified squamous epithelia.

The protein localises to the cytoplasm. In terms of biological role, part of the insoluble cornified cell envelope (CE) of stratified squamous epithelia. The protein is Involucrin (IVL) of Otolemur crassicaudatus (Brown greater galago).